Consider the following 29-residue polypeptide: Brevinin-2Ee (29 aa).

An intrachain disulfide couples Cys23 to Cys29.

The protein belongs to the frog skin active peptide (FSAP) family. Brevinin subfamily. In terms of tissue distribution, expressed by the skin glands.

The protein resides in the secreted. Its function is as follows. Shows antibacterial activity against representative Gram-negative and Gram-positive bacterial species, and hemolytic activity. The chain is Brevinin-2Ee from Pelophylax lessonae (Pool frog).